We begin with the raw amino-acid sequence, 262 residues long: MNLLTLQQMKERGEKIAVLTSYDASFAALSDKAGVDVLLVGDSLGMTMQGHANTLAVSLRDMEYHTRCVANGTQHAFIVTDMPFGSFQKTPEQAFENAVLLMAAGAQMVKVEGGAIMLETVRFLVERGIPVCGHLGLTPQSVHQFGGYRVQARDEAAARQLLDDAKALAAAGAGMLVLEMVPAALAAAVSQAVHIPVIGIGAGKYCDGQVLVLQDMLGIYAGKSPRFVRNFMQGAGSIEQAICDYVAAVKAQTFPGIEHTFE.

2 residues coordinate Mg(2+): aspartate 42 and aspartate 81. 3-methyl-2-oxobutanoate contacts are provided by residues 42 to 43 (DS), aspartate 81, and lysine 110. Residue glutamate 112 coordinates Mg(2+). Glutamate 179 serves as the catalytic Proton acceptor.

Belongs to the PanB family. As to quaternary structure, homodecamer; pentamer of dimers. It depends on Mg(2+) as a cofactor.

Its subcellular location is the cytoplasm. The enzyme catalyses 3-methyl-2-oxobutanoate + (6R)-5,10-methylene-5,6,7,8-tetrahydrofolate + H2O = 2-dehydropantoate + (6S)-5,6,7,8-tetrahydrofolate. Its pathway is cofactor biosynthesis; (R)-pantothenate biosynthesis; (R)-pantoate from 3-methyl-2-oxobutanoate: step 1/2. In terms of biological role, catalyzes the reversible reaction in which hydroxymethyl group from 5,10-methylenetetrahydrofolate is transferred onto alpha-ketoisovalerate to form ketopantoate. The chain is 3-methyl-2-oxobutanoate hydroxymethyltransferase from Methylobacillus flagellatus (strain ATCC 51484 / DSM 6875 / VKM B-1610 / KT).